The following is a 600-amino-acid chain: Chaperone protein DnaK (600 aa).

T175 bears the Phosphothreonine; by autocatalysis mark. The disordered stretch occupies residues 572–600 (FAQQTQQQDPNNQKDDVTEATVTDDSTKK). The span at 591–600 (ATVTDDSTKK) shows a compositional bias: polar residues.

This sequence belongs to the heat shock protein 70 family.

In terms of biological role, acts as a chaperone. The chain is Chaperone protein DnaK from Ureaplasma urealyticum serovar 10 (strain ATCC 33699 / Western).